Here is a 365-residue protein sequence, read N- to C-terminus: WAT1-related protein At1g01070 (365 aa).

Helical transmembrane passes span 14-34 (YSPV…NALV), 46-66 (VIGA…AYVL), 83-103 (FVSG…GLSY), 107-127 (TVSC…ALIF), 139-159 (AGML…FLTF), 189-209 (WLLG…WMLF), 221-241 (YSST…LSLY), 255-275 (FVIT…TVAT), 285-305 (VFAS…DFLI), and 310-330 (LYLG…MFLW). In terms of domain architecture, EamA 1 spans 27–157 (MGSVNALVKK…LICISGALFL (131 aa)). The EamA 2 domain occupies 223–329 (STCLMSIFAA…VTITGLYMFL (107 aa)). A compositionally biased stretch (polar residues) spans 340–356 (TALSSGMDNEAQYTTPN). Positions 340–365 (TALSSGMDNEAQYTTPNKDNDSKSPV) are disordered.

It belongs to the drug/metabolite transporter (DMT) superfamily. Plant drug/metabolite exporter (P-DME) (TC 2.A.7.4) family.

It localises to the membrane. This is WAT1-related protein At1g01070 from Arabidopsis thaliana (Mouse-ear cress).